The primary structure comprises 294 residues: ATP synthase gamma chain (294 aa).

It belongs to the ATPase gamma chain family. In terms of assembly, F-type ATPases have 2 components, CF(1) - the catalytic core - and CF(0) - the membrane proton channel. CF(1) has five subunits: alpha(3), beta(3), gamma(1), delta(1), epsilon(1). CF(0) has three main subunits: a, b and c.

Its subcellular location is the cell inner membrane. In terms of biological role, produces ATP from ADP in the presence of a proton gradient across the membrane. The gamma chain is believed to be important in regulating ATPase activity and the flow of protons through the CF(0) complex. The sequence is that of ATP synthase gamma chain from Campylobacter jejuni (strain RM1221).